The following is a 266-amino-acid chain: Ribosomal RNA small subunit methyltransferase A (266 aa).

The S-adenosyl-L-methionine site is built by Asn12, Leu14, Gly39, Glu61, Asp87, and Asn107.

Belongs to the class I-like SAM-binding methyltransferase superfamily. rRNA adenine N(6)-methyltransferase family. RsmA subfamily.

Its subcellular location is the cytoplasm. The catalysed reaction is adenosine(1518)/adenosine(1519) in 16S rRNA + 4 S-adenosyl-L-methionine = N(6)-dimethyladenosine(1518)/N(6)-dimethyladenosine(1519) in 16S rRNA + 4 S-adenosyl-L-homocysteine + 4 H(+). Functionally, specifically dimethylates two adjacent adenosines (A1518 and A1519) in the loop of a conserved hairpin near the 3'-end of 16S rRNA in the 30S particle. May play a critical role in biogenesis of 30S subunits. The polypeptide is Ribosomal RNA small subunit methyltransferase A (Nitratidesulfovibrio vulgaris (strain ATCC 29579 / DSM 644 / CCUG 34227 / NCIMB 8303 / VKM B-1760 / Hildenborough) (Desulfovibrio vulgaris)).